Here is a 200-residue protein sequence, read N- to C-terminus: Dual specificity tyrosine-phosphorylation-regulated kinase 1A (200 aa).

Residue Tyr-41 is modified to Phosphotyrosine; by autocatalysis. Position 58 (Lys-58) interacts with ATP. Tyr-76 is modified (phosphotyrosine; by autocatalysis). A Phosphoserine; by autocatalysis modification is found at Ser-88. A Phosphothreonine; by autocatalysis modification is found at Thr-122.

This sequence belongs to the protein kinase superfamily. CMGC Ser/Thr protein kinase family. MNB/DYRK subfamily. As to quaternary structure, interacts with RAD54L2/ARIP4. Interacts with CRY2. Interacts with RANBP9. Interacts with WDR68. Interacts with SIRT1. In terms of processing, can also autophosphorylate on serine and threonine residues (in vitro). Autophosphorylated on numerous tyrosine residues.

It is found in the nucleus. It catalyses the reaction L-tyrosyl-[protein] + ATP = O-phospho-L-tyrosyl-[protein] + ADP + H(+). The enzyme catalyses L-seryl-[protein] + ATP = O-phospho-L-seryl-[protein] + ADP + H(+). The catalysed reaction is L-threonyl-[protein] + ATP = O-phospho-L-threonyl-[protein] + ADP + H(+). It carries out the reaction [DNA-directed RNA polymerase] + ATP = phospho-[DNA-directed RNA polymerase] + ADP + H(+). With respect to regulation, inhibited by RANBP9. Functionally, dual-specificity kinase which possesses both serine/threonine and tyrosine kinase activities. Exhibits a substrate preference for proline at position P+1 and arginine at position P-3. Plays an important role in double-strand breaks (DSBs) repair following DNA damage. Mechanistically, phosphorylates RNF169 and increases its ability to block accumulation of TP53BP1 at the DSB sites thereby promoting homologous recombination repair (HRR). Also acts as a positive regulator of transcription by acting as a CTD kinase that mediates phosphorylation of the CTD (C-terminal domain) of the large subunit of RNA polymerase II (RNAP II) POLR2A. May play a role in a signaling pathway regulating nuclear functions of cell proliferation. Modulates alternative splicing by phosphorylating the splice factor SRSF6. Has pro-survival function and negatively regulates the apoptotic process. Promotes cell survival upon genotoxic stress through phosphorylation of SIRT1. This in turn inhibits p53/TP53 activity and apoptosis. Phosphorylates SEPTIN4, SEPTIN5 and SF3B1 at 'Thr-434'. The polypeptide is Dual specificity tyrosine-phosphorylation-regulated kinase 1A (Oryctolagus cuniculus (Rabbit)).